The following is a 400-amino-acid chain: Serine/threonine transporter SstT (400 aa).

Helical transmembrane passes span 11 to 31, 45 to 65, 81 to 101, 138 to 158, 175 to 195, 213 to 233, 242 to 264, 295 to 315, 327 to 347, and 354 to 374; these read IGLV…GWLA, FVGA…MAAI, IMYM…SFLF, AIAE…GFAL, AISQ…LGLV, ILMV…PLII, YPLV…SSAA, MAGA…TLGI, LVAT…LLLI, and FSIP…IGVI.

This sequence belongs to the dicarboxylate/amino acid:cation symporter (DAACS) (TC 2.A.23) family.

It is found in the cell inner membrane. It carries out the reaction L-serine(in) + Na(+)(in) = L-serine(out) + Na(+)(out). It catalyses the reaction L-threonine(in) + Na(+)(in) = L-threonine(out) + Na(+)(out). In terms of biological role, involved in the import of serine and threonine into the cell, with the concomitant import of sodium (symport system). In Psychrobacter cryohalolentis (strain ATCC BAA-1226 / DSM 17306 / VKM B-2378 / K5), this protein is Serine/threonine transporter SstT.